Reading from the N-terminus, the 349-residue chain is DNA polymerase IV (349 aa).

A UmuC domain is found at 7–188; that stretch reads IIHIDMDYFF…LPVKKLFGVG (182 aa). Positions 11 and 106 each coordinate Mg(2+). Glu107 is a catalytic residue.

This sequence belongs to the DNA polymerase type-Y family. As to quaternary structure, monomer. Mg(2+) serves as cofactor.

It is found in the cytoplasm. It carries out the reaction DNA(n) + a 2'-deoxyribonucleoside 5'-triphosphate = DNA(n+1) + diphosphate. Poorly processive, error-prone DNA polymerase involved in untargeted mutagenesis. Copies undamaged DNA at stalled replication forks, which arise in vivo from mismatched or misaligned primer ends. These misaligned primers can be extended by PolIV. Exhibits no 3'-5' exonuclease (proofreading) activity. May be involved in translesional synthesis, in conjunction with the beta clamp from PolIII. The sequence is that of DNA polymerase IV from Francisella tularensis subsp. novicida (strain U112).